We begin with the raw amino-acid sequence, 255 residues long: 3-deoxy-manno-octulosonate cytidylyltransferase (255 aa).

It belongs to the KdsB family.

The protein resides in the cytoplasm. The catalysed reaction is 3-deoxy-alpha-D-manno-oct-2-ulosonate + CTP = CMP-3-deoxy-beta-D-manno-octulosonate + diphosphate. It functions in the pathway nucleotide-sugar biosynthesis; CMP-3-deoxy-D-manno-octulosonate biosynthesis; CMP-3-deoxy-D-manno-octulosonate from 3-deoxy-D-manno-octulosonate and CTP: step 1/1. The protein operates within bacterial outer membrane biogenesis; lipopolysaccharide biosynthesis. Functionally, activates KDO (a required 8-carbon sugar) for incorporation into bacterial lipopolysaccharide in Gram-negative bacteria. The chain is 3-deoxy-manno-octulosonate cytidylyltransferase from Saccharophagus degradans (strain 2-40 / ATCC 43961 / DSM 17024).